The sequence spans 215 residues: N-(5'-phosphoribosyl)anthranilate isomerase (215 aa).

The protein belongs to the TrpF family.

The catalysed reaction is N-(5-phospho-beta-D-ribosyl)anthranilate = 1-(2-carboxyphenylamino)-1-deoxy-D-ribulose 5-phosphate. It functions in the pathway amino-acid biosynthesis; L-tryptophan biosynthesis; L-tryptophan from chorismate: step 3/5. The protein is N-(5'-phosphoribosyl)anthranilate isomerase of Paracoccus denitrificans (strain Pd 1222).